A 53-amino-acid chain; its full sequence is Small, acid-soluble spore protein K (53 aa).

Residues 1-53 (MRNKAHNFPNQNNNKLEGEPRAKAEYASKRADGTTNTHPQERMRASGERSDFF) form a disordered region. Basic and acidic residues-rich tracts occupy residues 16-32 (LEGEPRAKAEYASKRAD) and 39-53 (PQERMRASGERSDFF).

It belongs to the SspK family.

The protein resides in the spore core. This chain is Small, acid-soluble spore protein K, found in Geobacillus kaustophilus (strain HTA426).